We begin with the raw amino-acid sequence, 209 residues long: Protein ASG7 (209 aa).

Residues 1–49 are Lumenal-facing; it reads MTTLASSIEHKTKHLAAPFENDENPWMKKYCCQCKSCKMSVPVQPWLPR. The chain crosses the membrane as a helical span at residues 50 to 70; it reads FFVFGILCPVFWLVNLLAWWF. Topologically, residues 71–184 are cytoplasmic; the sequence is LQYWQPHELE…LLRKTFRDWN (114 aa). A phosphoserine mark is found at Ser121, Ser123, and Ser125. Thr153 is subject to Phosphothreonine. A helical membrane pass occupies residues 185 to 205; sequence LRSLLGLLIDSILIIFVVLLC. Topologically, residues 206–209 are lumenal; that stretch reads KKSR.

The protein localises to the endomembrane system. Required for receptor inhibition of inappropriately expressed a-factor receptor (STE3) in MAT a cells. Inhibits signaling by relocalizing the G protein beta-gamma (STE4-STE18) subunit to intracellular membranes. May also be a mechanism for the down-regulation of the mating pheromone response after the zygotic fusion event, promoting the transition of the new diploid cell to vegetative growth. The sequence is that of Protein ASG7 (ASG7) from Saccharomyces cerevisiae (strain ATCC 204508 / S288c) (Baker's yeast).